Consider the following 357-residue polypeptide: Protein Wnt-9b (357 aa).

The N-terminal stretch at 1–22 is a signal peptide; sequence MRPPPALALAGLCLLALPAAAA. Disulfide bonds link cysteine 89–cysteine 100, cysteine 135–cysteine 143, cysteine 145–cysteine 162, cysteine 210–cysteine 224, cysteine 212–cysteine 219, cysteine 291–cysteine 316, cysteine 305–cysteine 311, cysteine 315–cysteine 355, cysteine 331–cysteine 346, cysteine 333–cysteine 343, and cysteine 338–cysteine 339. N-linked (GlcNAc...) asparagine glycosylation is present at asparagine 99. A lipid anchor (O-palmitoleoyl serine; by PORCN) is attached at serine 216.

The protein belongs to the Wnt family. In terms of assembly, forms a soluble 1:1 complex with AFM; this prevents oligomerization and is required for prolonged biological activity. The complex with AFM may represent the physiological form in body fluids. Component of the Wnt-Fzd-LRP5-LRP6 signaling complex that contains a WNT protein, a FZD protein and LRP5 or LRP6. Interacts directly in the complex with LRP6. Interacts with PKD1 (via extracellular domain). Palmitoleoylation is required for efficient binding to frizzled receptors. Depalmitoleoylation leads to Wnt signaling pathway inhibition. Moderately expressed in fetal kidney and adult kidney. Also found in brain.

The protein localises to the secreted. It is found in the extracellular space. The protein resides in the extracellular matrix. In terms of biological role, ligand for members of the frizzled family of seven transmembrane receptors. Functions in the canonical Wnt/beta-catenin signaling pathway. Required for normal embryonic kidney development, and for normal development of the urogenital tract, including uterus and part of the oviduct and the upper vagina in females, and epididymis and vas deferens in males. Activates a signaling cascade in the metanephric mesenchyme that induces tubulogenesis. Acts upstream of WNT4 in the signaling pathways that mediate development of kidney tubules and the Muellerian ducts. Plays a role in cranofacial development and is required for normal fusion of the palate during embryonic development. The protein is Protein Wnt-9b (WNT9B) of Homo sapiens (Human).